The chain runs to 161 residues: ATP synthase subunit b (161 aa).

The helical transmembrane segment at 11-31 (AISFVLFVWFCMKYIWPPIIL) threads the bilayer.

This sequence belongs to the ATPase B chain family. In terms of assembly, F-type ATPases have 2 components, F(1) - the catalytic core - and F(0) - the membrane proton channel. F(1) has five subunits: alpha(3), beta(3), gamma(1), delta(1), epsilon(1). F(0) has three main subunits: a(1), b(2) and c(10-14). The alpha and beta chains form an alternating ring which encloses part of the gamma chain. F(1) is attached to F(0) by a central stalk formed by the gamma and epsilon chains, while a peripheral stalk is formed by the delta and b chains.

It is found in the cell membrane. Functionally, f(1)F(0) ATP synthase produces ATP from ADP in the presence of a proton or sodium gradient. F-type ATPases consist of two structural domains, F(1) containing the extramembraneous catalytic core and F(0) containing the membrane proton channel, linked together by a central stalk and a peripheral stalk. During catalysis, ATP synthesis in the catalytic domain of F(1) is coupled via a rotary mechanism of the central stalk subunits to proton translocation. In terms of biological role, component of the F(0) channel, it forms part of the peripheral stalk, linking F(1) to F(0). This is ATP synthase subunit b from Buchnera aphidicola subsp. Acyrthosiphon pisum (strain APS) (Acyrthosiphon pisum symbiotic bacterium).